A 55-amino-acid chain; its full sequence is Large ribosomal subunit protein bL33 (55 aa).

This sequence belongs to the bacterial ribosomal protein bL33 family.

This Clavibacter sepedonicus (Clavibacter michiganensis subsp. sepedonicus) protein is Large ribosomal subunit protein bL33.